The sequence spans 472 residues: Uronate isomerase (472 aa).

It belongs to the metallo-dependent hydrolases superfamily. Uronate isomerase family.

The enzyme catalyses D-glucuronate = D-fructuronate. It catalyses the reaction aldehydo-D-galacturonate = keto-D-tagaturonate. The protein operates within carbohydrate metabolism; pentose and glucuronate interconversion. The protein is Uronate isomerase of Lactococcus lactis subsp. cremoris (strain MG1363).